We begin with the raw amino-acid sequence, 319 residues long: Protein StrN (319 aa).

It functions in the pathway antibiotic biosynthesis; streptomycin biosynthesis. The sequence is that of Protein StrN (strN) from Streptomyces griseus.